Here is a 404-residue protein sequence, read N- to C-terminus: S-adenosylmethionine synthase (404 aa).

His17 serves as a coordination point for ATP. A Mg(2+)-binding site is contributed by Asp19. Residue Glu45 participates in K(+) binding. L-methionine contacts are provided by Glu58 and Gln101. The interval 101–111 (QSPDINRGVDR) is flexible loop. ATP is bound by residues 172-174 (DAK), 246-247 (RF), Asp255, 261-262 (RK), Ala278, and Lys282. Position 255 (Asp255) interacts with L-methionine. Lys286 is an L-methionine binding site.

Belongs to the AdoMet synthase family. As to quaternary structure, homotetramer; dimer of dimers. The cofactor is Mg(2+). K(+) is required as a cofactor.

It localises to the cytoplasm. The enzyme catalyses L-methionine + ATP + H2O = S-adenosyl-L-methionine + phosphate + diphosphate. The protein operates within amino-acid biosynthesis; S-adenosyl-L-methionine biosynthesis; S-adenosyl-L-methionine from L-methionine: step 1/1. Functionally, catalyzes the formation of S-adenosylmethionine (AdoMet) from methionine and ATP. The overall synthetic reaction is composed of two sequential steps, AdoMet formation and the subsequent tripolyphosphate hydrolysis which occurs prior to release of AdoMet from the enzyme. The polypeptide is S-adenosylmethionine synthase (Chlorobaculum tepidum (strain ATCC 49652 / DSM 12025 / NBRC 103806 / TLS) (Chlorobium tepidum)).